Here is a 284-residue protein sequence, read N- to C-terminus: Protein phosphatase 1 regulatory subunit 3B (284 aa).

A PP1-binding motif motif is present at residues 61–64 (RVSF). Positions 124–232 (RNRLQTNHVC…SNKGKNYRIT (109 aa)) constitute a CBM21 domain. Ser-260 bears the Phosphoserine mark.

Interacts with glycogen, PPP1CC catalytic subunit of PP1 and PYGL. Associates with glycogen particles. Forms complexes with debranching enzyme, glycogen phosphorylase, glycogen synthase and phosphorylase kinase which is necessary for its regulation of PP1 activity. As to expression, highly expressed in liver (at protein level). Expressed predominantly in liver. Expressed moderately in heart. Expressed weakly in prostate, stomach, thyroid, lung, kidney, spleen and skeletal muscle.

In terms of biological role, acts as a glycogen-targeting subunit for phosphatase PP1. Facilitates interaction of the PP1 with enzymes of the glycogen metabolism and regulates its activity. Suppresses the rate at which PP1 dephosphorylates (inactivates) glycogen phosphorylase and enhances the rate at which it activates glycogen synthase and therefore limits glycogen breakdown. Its activity is inhibited by PYGL, resulting in inhibition of the glycogen synthase and glycogen phosphorylase phosphatase activities of PP1. Dramatically increases basal and insulin-stimulated glycogen synthesis upon overexpression in hepatocytes. In Mus musculus (Mouse), this protein is Protein phosphatase 1 regulatory subunit 3B (Ppp1r3b).